Reading from the N-terminus, the 438-residue chain is Putative formin-like protein 21a (438 aa).

Residues 1–74 (MSPVEISGAD…RVLPRPPPPP (74 aa)) form a disordered region. Pro residues predominate over residues 22-61 (PLPPPPPPPPPPMRRRAPLPPPPPPPMRRRAPLPPPPPPA). The FH2 domain occupies 124 to 438 (FPCPSKKKSS…SYGYFDQPWI (315 aa)).

This sequence belongs to the formin-like family. Class-II subfamily.

The sequence is that of Putative formin-like protein 21a (FH21A) from Arabidopsis thaliana (Mouse-ear cress).